Here is a 469-residue protein sequence, read N- to C-terminus: MLPPWTLGLLLLATVRGKEVCYGQLGCFSDEKPWAGTLQRPVKLLPWSPEDIDTRFLLYTNENPNNFQLITGTEPDTIEASNFQLDRKTRFIIHGFLDKAEDSWPSDMCKKMFEVEKVNCICVDWRHGSRAMYTQAVQNIRVVGAETAFLIQALSTQLGYSLEDVHVIGHSLGAHTAAEAGRRLGGRVGRITGLDPAGPCFQDEPEEVRLDPSDAVFVDVIHTDSSPIVPSLGFGMSQKVGHLDFFPNGGKEMPGCKKNVLSTITDIDGIWEGIGGFVSCNHLRSFEYYSSSVLNPDGFLGYPCASYDEFQESKCFPCPAEGCPKMGHYADQFKGKTSAVEQTFFLNTGESGNFTSWRYKISVTLSGKEKVNGYIRIALYGSNENSKQYEIFKGSLKPDASHTCAIDVDFNVGKIQKVKFLWNKRGINLSEPKLGASQITVQSGEDGTEYNFCSSDTVEENVLQSLYPC.

The first 17 residues, 1–17 (MLPPWTLGLLLLATVRG), serve as a signal peptide directing secretion. Cys-21 and Cys-27 are joined by a disulfide. The segment at 93-105 (IHGFLDKAEDSWP) is required for galactolipase activity. A disulfide bond links Cys-109 and Cys-120. Residue Ser-171 is the Nucleophile of the active site. The Charge relay system role is filled by Asp-195. Residues Glu-206, Arg-209, Asp-211, and Asp-214 each contribute to the Ca(2+) site. Cys-256 and Cys-280 form a disulfide bridge. The segment at 257–279 (KKNVLSTITDIDGIWEGIGGFVS) is required for galactolipase activity. His-282 (charge relay system) is an active-site residue. 2 cysteine pairs are disulfide-bonded: Cys-304-Cys-315 and Cys-318-Cys-323. N-linked (GlcNAc...) asparagine glycosylation is found at Asn-353 and Asn-428. The PLAT domain maps to 357–469 (WRYKISVTLS…ENVLQSLYPC (113 aa)). Cysteines 453 and 469 form a disulfide.

It belongs to the AB hydrolase superfamily. Lipase family. Pancreas.

The protein resides in the secreted. It is found in the zymogen granule membrane. It localises to the cell projection. Its subcellular location is the neuron projection. It carries out the reaction a triacylglycerol + H2O = a diacylglycerol + a fatty acid + H(+). The catalysed reaction is a 1,2-diacyl-3-O-(beta-D-galactosyl)-sn-glycerol + 2 H2O = 3-beta-D-galactosyl-sn-glycerol + 2 a fatty acid + 2 H(+). The enzyme catalyses 1,2,3-tri-(9Z-octadecenoyl)-glycerol + H2O = di-(9Z)-octadecenoylglycerol + (9Z)-octadecenoate + H(+). It catalyses the reaction di-(9Z)-octadecenoylglycerol + H2O = (9Z-octadecenoyl)-glycerol + (9Z)-octadecenoate + H(+). It carries out the reaction (9Z-octadecenoyl)-glycerol + H2O = glycerol + (9Z)-octadecenoate + H(+). The catalysed reaction is 1-(9Z-octadecenoyl)-glycerol + H2O = glycerol + (9Z)-octadecenoate + H(+). The enzyme catalyses 1,2,3-tripropanoylglycerol + H2O = dipropanoylglycerol + propanoate + H(+). It catalyses the reaction 1,2,3-tributanoylglycerol + H2O = dibutanoylglycerol + butanoate + H(+). It carries out the reaction 1,2,3-trioctanoylglycerol + H2O = dioctanoylglycerol + octanoate + H(+). The catalysed reaction is 1,2-didecanoylglycerol + H2O = decanoylglycerol + decanoate + H(+). The enzyme catalyses long chain 1,2-diacyl-3-O-beta-D-galactosyl-sn-glycerol + H2O = long chain acyl-3-O-beta-D-galactosyl-sn-glycerol + a fatty acid + H(+). It catalyses the reaction 1,2-dioctanoyl-3-O-beta-D-galactosyl-sn-glycerol + H2O = octanoyl-3-(beta-D-galactosyl)-sn-glycerol + octanoate + H(+). It carries out the reaction 1,2-didodecanoyl-3-beta-D-galactosyl-sn-glycerol + H2O = dodecanoyl-3-beta-D-galactosyl-sn-glycerol + dodecanoate + H(+). The catalysed reaction is 1-beta-D-galactosyl-2,3-didodecanoyl-sn-glycerol + H2O = 1-beta-D-galactosyl-dodecanoyl-sn-glycerol + dodecanoate + H(+). The enzyme catalyses a 1,2-diacyl-3-O-[alpha-D-galactosyl-(1-&gt;6)-beta-D-galactosyl]-sn-glycerol + H2O = acyl-3-O-[alpha-D-galactosyl-(1-&gt;6)-beta-D-galactosyl]-sn-glycerol + a fatty acid + H(+). It catalyses the reaction long chain 1,2-diacyl-3-O-[alpha-D-galactosyl-(1-&gt;6)-beta-D-galactosyl]-sn-glycerol + H2O = long chain acyl-3-O-[alpha-D-galactosyl-(1-&gt;6)-beta-D-galactosyl]-sn-glycerol + a fatty acid + H(+). It carries out the reaction 1,2-dioctanoyl-3-O-[alpha-D-galactosyl-(1-&gt;6)-beta-D-galactosyl]-sn-glycerol + H2O = octanoyl-3-O-[alpha-D-galactosyl-(1-&gt;6)-beta-D-galactosyl]-sn-glycerol + octanoate + H(+). The catalysed reaction is 1,2-didodecanoyl-3-O-[alpha-D-galactosyl-(1-&gt;6)-beta-D-galactosyl]-sn-glycerol + H2O = dodecanoyl-3-O-[alpha-D-galactosyl-(1-&gt;6)-beta-D-galactosyl]-sn-glycerol + dodecanoate + H(+). The enzyme catalyses a 1,2-diacyl-sn-glycero-3-phosphocholine + H2O = a monoacyl-sn-glycero-3-phosphocholine + a fatty acid + H(+). Its pathway is glycerolipid metabolism; triacylglycerol degradation. The protein operates within glycolipid metabolism. Its activity is regulated as follows. Regulated by CLPS and bile salts levels ranging 1-5 mM in neonates and 2-30 mM in healthy adults. CLPS stimulates milk fat digestion in the presence of 4 mM bile salts. Triacylglycerol lipase activity toward short- and medium-chain triglycerides is inhibited by increasing concentrations of bile salts and weakly reactivated by CLPS. Optimal triacylglycerol lipase activity is reached at bile salts concentrations ranging from 0.1 to 0.5 mM and then decreases at concentrations higher than 1 mM. Lipase activity toward long-chain glycerolipids is stimulated by CLPS in the presence of 4 mM bile salts. Galactolipase activity is inhibited at high concentrations of bile salts. Triacylglycerol lipase activity is inhibited by anti-obesity drug tetrahydrolipstatin. In terms of biological role, lipase that primarily hydrolyzes triglycerides and galactosylglycerides. In neonates, may play a major role in pancreatic digestion of dietary fats such as milk fat globules enriched in long-chain triglycerides. Hydrolyzes short-, medium- and long-chain fatty acyls in triglycerides without apparent positional specificity. Can completely deacylate triacylglycerols. When the liver matures and bile salt synthesis increases, likely functions mainly as a galactolipase and monoacylglycerol lipase. Hydrolyzes monogalactosyldiglycerols (MGDG) and digalactosyldiacylglycerols (DGDG) present in a plant-based diet, releasing long-chain polyunsaturated fatty acids. Hydrolyzes medium- and long-chain fatty acyls in galactolipids. May act together with LIPF to hydrolyze partially digested triglycerides. Hydrolyzes long-chain monoglycerides with high efficiency. In cytotoxic T cells, contributes to perforin-dependent cell lysis, but is unlikely to mediate direct cytotoxicity. Also has low phospholipase activity. In neurons, required for the localization of the phospholipid 1-oleoyl-2-palmitoyl-PC (OPPC) to neurite tips through acyl chain remodeling of membrane phospholipids. The resulting OPPC-rich lipid membrane domain recruits the t-SNARE protein STX4 by selectively interacting with the STX4 transmembrane domain and this promotes surface expression of the dopamine transporter SLC6A3/DAT at neurite tips by facilitating fusion of SLC6A3-containing transport vesicles with the plasma membrane. The polypeptide is Pancreatic lipase-related protein 2 (Homo sapiens (Human)).